The following is a 253-amino-acid chain: Phycoerythrobilin:ferredoxin oxidoreductase (253 aa).

This sequence belongs to the HY2 family.

It carries out the reaction (3Z)-phycoerythrobilin + oxidized 2[4Fe-4S]-[ferredoxin] = 15,16-dihydrobiliverdin + reduced 2[4Fe-4S]-[ferredoxin] + 2 H(+). In terms of biological role, catalyzes the two-electron reduction of the C2 and C3(1) diene system of 15,16-dihydrobiliverdin. This is Phycoerythrobilin:ferredoxin oxidoreductase from Prochlorococcus marinus (strain AS9601).